A 323-amino-acid polypeptide reads, in one-letter code: Cyclin-H (323 aa).

Phosphoserine; by CDK8 is present on Ser5. The residue at position 132 (Ser132) is a Phosphoserine. Positions 295-323 are disordered; the sequence is KGYEDDDYVSKKPKQEEEEWTDDDLVDSL. Residue Ser304 is modified to Phosphoserine; by CDK8. The span at 310 to 323 shows a compositional bias: acidic residues; it reads EEEEWTDDDLVDSL. Thr315 is subject to Phosphothreonine. Phosphoserine is present on Ser322.

Belongs to the cyclin family. Cyclin C subfamily. In terms of assembly, associates primarily with CDK7 and MAT1 to form the CAK complex. CAK can further associate with the core-TFIIH to form the TFIIH basal transcription factor. As to expression, expressed in both the germinal and somatic cells of the testis.

It localises to the nucleus. Regulates CDK7, the catalytic subunit of the CDK-activating kinase (CAK) enzymatic complex. CAK activates the cyclin-associated kinases CDK1, CDK2, CDK4 and CDK6 by threonine phosphorylation. CAK complexed to the core-TFIIH basal transcription factor activates RNA polymerase II by serine phosphorylation of the repetitive C-terminal domain (CTD) of its large subunit (POLR2A), allowing its escape from the promoter and elongation of the transcripts. Involved in cell cycle control and in RNA transcription by RNA polymerase II. Its expression and activity are constant throughout the cell cycle. The protein is Cyclin-H (Ccnh) of Mus musculus (Mouse).